A 239-amino-acid polypeptide reads, in one-letter code: Major prion protein (239 aa).

Positions 1–15 (MLVLFVATWSDLGLC) are cleaved as a signal peptide. The segment at 15 to 98 (CKKRPKPGGW…NQWNKPSKPK (84 aa)) is disordered. An interaction with ADGRG6 region spans residues 16 to 31 (KKRPKPGGWNTGGSRY). Residues 16-222 (KKRPKPGGWN…ESQAYYQRGS (207 aa)) form an interaction with GRB2, ERI3 and SYN1 region. Tandem repeats lie at residues 44-51 (PQSGGWGQ), 52-59 (PHGGGWGQ), 60-67 (PHGGGWGQ), 68-75 (PHGGGWGQ), and 76-83 (PHGGGWGQ). A 5 X 8 AA tandem repeats of P-H-G-G-G-W-G-Q region spans residues 44–83 (PQSGGWGQPHGGGWGQPHGGGWGQPHGGGWGQPHGGGWGQ). The segment covering 47 to 87 (GGWGQPHGGGWGQPHGGGWGQPHGGGWGQPHGGGWGQGGGT) has biased composition (gly residues). Residues His-53, Gly-54, Gly-55, His-61, Gly-62, Gly-63, His-69, Gly-70, Gly-71, His-77, Gly-78, and Gly-79 each coordinate Cu(2+). A disulfide bridge connects residues Cys-171 and Cys-206. N-linked (GlcNAc...) asparagine glycans are attached at residues Asn-173 and Asn-189. The GPI-anchor amidated serine moiety is linked to residue Ser-222. Residues 223-239 (SMVLFSSPPVILLISFL) constitute a propeptide, removed in mature form.

It belongs to the prion family. As to quaternary structure, monomer and homodimer. Has a tendency to aggregate into amyloid fibrils containing a cross-beta spine, formed by a steric zipper of superposed beta-strands. Soluble oligomers may represent an intermediate stage on the path to fibril formation. Copper binding may promote oligomerization. Interacts with GRB2, APP, ERI3/PRNPIP and SYN1. Mislocalized cytosolically exposed PrP interacts with MGRN1; this interaction alters MGRN1 subcellular location and causes lysosomal enlargement. Interacts with APP. Interacts with KIAA1191. Interacts with ADGRG6.

It localises to the cell membrane. It is found in the golgi apparatus. Functionally, its primary physiological function is unclear. May play a role in neuronal development and synaptic plasticity. May be required for neuronal myelin sheath maintenance. May promote myelin homeostasis through acting as an agonist for ADGRG6 receptor. May play a role in iron uptake and iron homeostasis. Soluble oligomers are toxic to cultured neuroblastoma cells and induce apoptosis (in vitro). Association with GPC1 (via its heparan sulfate chains) targets PRNP to lipid rafts. Also provides Cu(2+) or Zn(2+) for the ascorbate-mediated GPC1 deaminase degradation of its heparan sulfate side chains. This chain is Major prion protein (PRNP), found in Aotus trivirgatus (Three-striped night monkey).